The chain runs to 266 residues: GATA zinc finger domain-containing protein 1 (266 aa).

The GATA-type zinc-finger motif lies at 9-33 (CSMCKTTSSSMWKKSPQGEILCHHC). The segment covering 59–72 (TTTFATTSAGPSQS) has biased composition (low complexity). Residues 59 to 112 (TTTFATTSAGPSQSNGGGGGKQSKQEIHRRSARLRNTKYKSAPAAEKKVSTKGK) form a disordered region. Lys259 is covalently cross-linked (Glycyl lysine isopeptide (Lys-Gly) (interchain with G-Cter in SUMO2)).

Component of a chromatin complex, at least composed of KDM5A, GATAD1 and EMSY. Expressed in the eye (lens, ciliary body, retina, sclera and conjunctiva) at postnatal day 2 and 10. Not detected anywhere at postnatal day 14.

Its subcellular location is the nucleus. In terms of biological role, component of some chromatin complex recruited to chromatin sites methylated 'Lys-4' of histone H3 (H3K4me), with a preference for trimethylated form (H3K4me3). The chain is GATA zinc finger domain-containing protein 1 (Gatad1) from Mus musculus (Mouse).